We begin with the raw amino-acid sequence, 438 residues long: sn-glycerol-3-phosphate-binding periplasmic protein UgpB (438 aa).

The N-terminal stretch at 1-23 (MKPLHYTASALALGLALMGNAQA) is a signal peptide. 7 residues coordinate sn-glycerol 3-phosphate: Tyr65, Glu89, Ser144, Ser270, Gly307, Tyr346, and Arg397.

Belongs to the bacterial solute-binding protein 1 family. The complex is composed of two ATP-binding proteins (UgpC), two transmembrane proteins (UgpA and UgpE) and a solute-binding protein (UgpB).

Its subcellular location is the periplasm. Part of the ABC transporter complex UgpBAEC involved in sn-glycerol-3-phosphate (G3P) import. Binds G3P. The sequence is that of sn-glycerol-3-phosphate-binding periplasmic protein UgpB (ugpB) from Shigella dysenteriae serotype 1 (strain Sd197).